The following is a 220-amino-acid chain: Peritrophin-55 (220 aa).

An N-terminal signal peptide occupies residues 1 to 19 (MKSVFVCTLVLALAHHAFA). Residue N29 is glycosylated (N-linked (GlcNAc...) asparagine). Residues 33–95 (ITPCLGNDII…NFIPAPTCEY (63 aa)) enclose the Chitin-binding type-2 domain. A disulfide bond links C68 and C84. Over residues 116-165 (TTLKTTPSKTTPIVTTAPPSTPVPSTIVTNKPDPTTPKTTKPPKVTTTVN) the composition is skewed to low complexity. A disordered region spans residues 116-220 (TTLKTTPSKT…TPPSIVQLQN (105 aa)). A compositionally biased stretch (pro residues) spans 197 to 210 (PTPPGMPPTPPSFG).

In terms of processing, glycosylated. In terms of tissue distribution, larval peritrophic membrane.

May bind oligosaccharide structures. In Lucilia cuprina (Green bottle fly), this protein is Peritrophin-55.